A 583-amino-acid chain; its full sequence is 2-succinyl-5-enolpyruvyl-6-hydroxy-3-cyclohexene-1-carboxylate synthase (583 aa).

It belongs to the TPP enzyme family. MenD subfamily. Homodimer. Mg(2+) serves as cofactor. The cofactor is Mn(2+). Requires thiamine diphosphate as cofactor.

The catalysed reaction is isochorismate + 2-oxoglutarate + H(+) = 5-enolpyruvoyl-6-hydroxy-2-succinyl-cyclohex-3-ene-1-carboxylate + CO2. It functions in the pathway quinol/quinone metabolism; 1,4-dihydroxy-2-naphthoate biosynthesis; 1,4-dihydroxy-2-naphthoate from chorismate: step 2/7. The protein operates within quinol/quinone metabolism; menaquinone biosynthesis. In terms of biological role, catalyzes the thiamine diphosphate-dependent decarboxylation of 2-oxoglutarate and the subsequent addition of the resulting succinic semialdehyde-thiamine pyrophosphate anion to isochorismate to yield 2-succinyl-5-enolpyruvyl-6-hydroxy-3-cyclohexene-1-carboxylate (SEPHCHC). This Chlorobium phaeovibrioides (strain DSM 265 / 1930) (Prosthecochloris vibrioformis (strain DSM 265)) protein is 2-succinyl-5-enolpyruvyl-6-hydroxy-3-cyclohexene-1-carboxylate synthase.